The chain runs to 254 residues: Imidazole glycerol phosphate synthase subunit HisF (254 aa).

Residues Asp-12 and Asp-131 contribute to the active site.

This sequence belongs to the HisA/HisF family. In terms of assembly, heterodimer of HisH and HisF.

It is found in the cytoplasm. It carries out the reaction 5-[(5-phospho-1-deoxy-D-ribulos-1-ylimino)methylamino]-1-(5-phospho-beta-D-ribosyl)imidazole-4-carboxamide + L-glutamine = D-erythro-1-(imidazol-4-yl)glycerol 3-phosphate + 5-amino-1-(5-phospho-beta-D-ribosyl)imidazole-4-carboxamide + L-glutamate + H(+). It participates in amino-acid biosynthesis; L-histidine biosynthesis; L-histidine from 5-phospho-alpha-D-ribose 1-diphosphate: step 5/9. In terms of biological role, IGPS catalyzes the conversion of PRFAR and glutamine to IGP, AICAR and glutamate. The HisF subunit catalyzes the cyclization activity that produces IGP and AICAR from PRFAR using the ammonia provided by the HisH subunit. This Desulfitobacterium hafniense (strain Y51) protein is Imidazole glycerol phosphate synthase subunit HisF.